Consider the following 279-residue polypeptide: Secreted RxLR effector protein 152 (279 aa).

Positions 1–22 (MRNGSVLFGLFFIGHSCSVLLA) are cleaved as a signal peptide. The short motif at 47-62 (RTLQADDSERTLAEER) is the RxLR-dEER element.

The protein belongs to the RxLR effector family.

The protein resides in the secreted. The protein localises to the host nucleus. Functionally, secreted effector that completely suppresses the host cell death induced by cell death-inducing proteins. This chain is Secreted RxLR effector protein 152, found in Plasmopara viticola (Downy mildew of grapevine).